Here is a 460-residue protein sequence, read N- to C-terminus: Argininosuccinate lyase (460 aa).

Belongs to the lyase 1 family. Argininosuccinate lyase subfamily.

It localises to the cytoplasm. The catalysed reaction is 2-(N(omega)-L-arginino)succinate = fumarate + L-arginine. Its pathway is amino-acid biosynthesis; L-arginine biosynthesis; L-arginine from L-ornithine and carbamoyl phosphate: step 3/3. The protein is Argininosuccinate lyase of Oleidesulfovibrio alaskensis (strain ATCC BAA-1058 / DSM 17464 / G20) (Desulfovibrio alaskensis).